Reading from the N-terminus, the 355-residue chain is Ataxin-3 (355 aa).

M1 is covalently cross-linked (Peptide (Met-Gly) (interchain with G-Cter in ubiquitin)). Residues 1–180 (MESIFHEKQE…DCEADQLLQM (180 aa)) form the Josephin domain. Catalysis depends on C14, which acts as the Nucleophile. The active-site Proton acceptor is the H119. The active site involves N134. Residue K200 forms a Glycyl lysine isopeptide (Lys-Gly) (interchain with G-Cter in ubiquitin) linkage. S219 carries the phosphoserine modification. UIM domains follow at residues 224–243 (EDED…IDME) and 244–263 (DEEA…SSRS). Residues 257-275 (MQGSSRSMCENSPQTSSPD) show a composition bias toward polar residues. The interval 257–355 (MQGSSRSMCE…KDNLKAERKK (99 aa)) is disordered. Residues S268, S272, and S273 each carry the phosphoserine modification. Basic and acidic residues predominate over residues 279–289 (EELRRRREAYF). S321 carries the phosphoserine modification. Residues 329 to 348 (SEEDMLRAAVTMSLETAKDN) form the UIM 3 domain. The span at 344–355 (TAKDNLKAERKK) shows a compositional bias: basic and acidic residues.

In terms of assembly, interacts with STUB1/CHIP (when monoubiquitinated). Interacts with DNA repair proteins RAD23A and RAD23B. Interacts with BECN1 (via its poly-Gln domain). Interacts with PRKN, UBR2, VCP and tubulin. Monoubiquitinated by UBE2W, possibly leading to activate the deubiquitinating enzyme activity.

It is found in the nucleus matrix. It localises to the nucleus. The protein localises to the lysosome membrane. It carries out the reaction Thiol-dependent hydrolysis of ester, thioester, amide, peptide and isopeptide bonds formed by the C-terminal Gly of ubiquitin (a 76-residue protein attached to proteins as an intracellular targeting signal).. Deubiquitinating enzyme involved in protein homeostasis maintenance, transcription, cytoskeleton regulation, myogenesis and degradation of misfolded chaperone substrates. Binds long polyubiquitin chains and trims them, while it has weak or no activity against chains of 4 or less ubiquitins. Involved in degradation of misfolded chaperone substrates via its interaction with STUB1/CHIP: recruited to monoubiquitinated STUB1/CHIP, and restricts the length of ubiquitin chain attached to STUB1/CHIP substrates and preventing further chain extension. Interacts with key regulators of transcription and represses transcription: acts as a histone-binding protein that regulates transcription. Acts as a negative regulator of mTORC1 signaling in response to amino acid deprivation by mediating deubiquitination of RHEB, thereby promoting RHEB inactivation by the TSC-TBC complex. Regulates autophagy via the deubiquitination of 'Lys-402' of BECN1 leading to the stabilization of BECN1. The protein is Ataxin-3 (Atxn3) of Mus musculus (Mouse).